The chain runs to 122 residues: Phosphoribosyl-ATP pyrophosphatase (122 aa).

This sequence belongs to the PRA-PH family.

It localises to the cytoplasm. The catalysed reaction is 1-(5-phospho-beta-D-ribosyl)-ATP + H2O = 1-(5-phospho-beta-D-ribosyl)-5'-AMP + diphosphate + H(+). It functions in the pathway amino-acid biosynthesis; L-histidine biosynthesis; L-histidine from 5-phospho-alpha-D-ribose 1-diphosphate: step 2/9. This Burkholderia thailandensis (strain ATCC 700388 / DSM 13276 / CCUG 48851 / CIP 106301 / E264) protein is Phosphoribosyl-ATP pyrophosphatase.